A 111-amino-acid chain; its full sequence is Small ribosomal subunit protein bS16 (111 aa).

It belongs to the bacterial ribosomal protein bS16 family.

The protein is Small ribosomal subunit protein bS16 of Rickettsia bellii (strain OSU 85-389).